We begin with the raw amino-acid sequence, 508 residues long: Photosystem II CP47 reaction center protein (508 aa).

The next 6 helical transmembrane spans lie at 21 to 36 (AVHIMHTALVSGWAGS), 101 to 115 (IVFSGLCFLAAIWHW), 140 to 156 (GIHLFLAGVACFGFGAF), 203 to 218 (IAAGTLGILAGLFHLS), 237 to 252 (VLSSSIAAVFFAAFVV), and 457 to 472 (TFALLFFFGHIWHGAR).

It belongs to the PsbB/PsbC family. PsbB subfamily. In terms of assembly, PSII is composed of 1 copy each of membrane proteins PsbA, PsbB, PsbC, PsbD, PsbE, PsbF, PsbH, PsbI, PsbJ, PsbK, PsbL, PsbM, PsbT, PsbX, PsbY, PsbZ, Psb30/Ycf12, at least 3 peripheral proteins of the oxygen-evolving complex and a large number of cofactors. It forms dimeric complexes. Binds multiple chlorophylls. PSII binds additional chlorophylls, carotenoids and specific lipids. serves as cofactor.

It localises to the plastid. Its subcellular location is the chloroplast thylakoid membrane. In terms of biological role, one of the components of the core complex of photosystem II (PSII). It binds chlorophyll and helps catalyze the primary light-induced photochemical processes of PSII. PSII is a light-driven water:plastoquinone oxidoreductase, using light energy to abstract electrons from H(2)O, generating O(2) and a proton gradient subsequently used for ATP formation. This chain is Photosystem II CP47 reaction center protein, found in Lolium perenne (Perennial ryegrass).